The primary structure comprises 235 residues: Urease accessory protein UreF (235 aa).

Belongs to the UreF family. UreD, UreF and UreG form a complex that acts as a GTP-hydrolysis-dependent molecular chaperone, activating the urease apoprotein by helping to assemble the nickel containing metallocenter of UreC. The UreE protein probably delivers the nickel.

The protein localises to the cytoplasm. Functionally, required for maturation of urease via the functional incorporation of the urease nickel metallocenter. In Ureaplasma urealyticum serovar 10 (strain ATCC 33699 / Western), this protein is Urease accessory protein UreF.